Consider the following 275-residue polypeptide: U6 snRNA phosphodiesterase 1 (275 aa).

Residues 1-25 are disordered; it reads MEFLKHYEDDEDQDDENNTKDENVN. The active-site Proton acceptor is the H122. Residues 122 to 124, Y206, and 208 to 214 contribute to the AMP site; these read HIS and NPEPHLS. Residues Y206 and 210-214 contribute to the UMP site; that span reads EPHLS. Residue H212 is the Proton donor of the active site.

Belongs to the 2H phosphoesterase superfamily. USB1 family.

It is found in the nucleus. The enzyme catalyses a 3'-end uridylyl-uridine-RNA = a 3'-end 2',3'-cyclophospho-uridine-RNA + uridine. 3'-5' RNA exonuclease that trims the 3' end of oligo(U) tracts of the pre-U6 small nuclear RNA (snRNA) molecule, leading to the formation of a mature U6 snRNA 3' end-terminated with a 2',3'-cyclic phosphate. Participates in the U6 snRNA 3' end processing that prevents U6 snRNA degradation. This is U6 snRNA phosphodiesterase 1 from Dictyostelium discoideum (Social amoeba).